A 411-amino-acid polypeptide reads, in one-letter code: Serine hydroxymethyltransferase (411 aa).

120–122 (GHL) contributes to the (6S)-5,6,7,8-tetrahydrofolate binding site. Lys-225 is subject to N6-(pyridoxal phosphate)lysine. (6S)-5,6,7,8-tetrahydrofolate is bound at residue 350-352 (SPF).

The protein belongs to the SHMT family. As to quaternary structure, homodimer. The cofactor is pyridoxal 5'-phosphate.

It is found in the cytoplasm. It catalyses the reaction (6R)-5,10-methylene-5,6,7,8-tetrahydrofolate + glycine + H2O = (6S)-5,6,7,8-tetrahydrofolate + L-serine. It functions in the pathway one-carbon metabolism; tetrahydrofolate interconversion. The protein operates within amino-acid biosynthesis; glycine biosynthesis; glycine from L-serine: step 1/1. Catalyzes the reversible interconversion of serine and glycine with tetrahydrofolate (THF) serving as the one-carbon carrier. This reaction serves as the major source of one-carbon groups required for the biosynthesis of purines, thymidylate, methionine, and other important biomolecules. Also exhibits THF-independent aldolase activity toward beta-hydroxyamino acids, producing glycine and aldehydes, via a retro-aldol mechanism. The sequence is that of Serine hydroxymethyltransferase from Limosilactobacillus reuteri (strain DSM 20016) (Lactobacillus reuteri).